The following is an 82-amino-acid chain: Diphthamide biosynthesis protein 3 (82 aa).

Positions 3–59 (TYDEIEIEDMTFEPENQMFTYPCPCGDRFQIYLDDMFEGEKVAVCPSCSLMIDVVFD) constitute a DPH-type MB domain. Residues Cys-25, Cys-27, Cys-47, and Cys-50 each coordinate Fe cation. Residues 66 to 82 (YYEEAGIHPPEPIAAAA) are required for interaction with the elongator complex.

It belongs to the DPH3 family. As to quaternary structure, component of the 2-(3-amino-3-carboxypropyl)histidine synthase complex composed of DPH1, DPH2, KTI11/DPH3 and a NADH-dependent reductase, predominantly CBR1. Interacts with DPH1. Interacts with DPH2. Interacts with CBR1. Interacts with elongation factor 2. Interacts with ATS1/KTI13; the interaction is direct. Interacts with the 40S ribosomal protein RPS7A. Interacts with the 40S ribosomal protein RPS19A. Interacts with the elongator complex subunit IKI3/ELP1. Interacts with the elongator complex subunit ELP2. Interacts with the elongator complex subunit ELP3. Interacts with the elongator complex subunit ELP5.

It is found in the cytoplasm. It localises to the nucleus. The catalysed reaction is [3Fe-4S](1+)-[protein] + Fe(2+)-[Dph3] = [3Fe-4S](0)-[protein] + Fe(3+)-[Dph3]. The enzyme catalyses 2 [3Fe-4S](0)-[protein] + 2 Fe(2+)-[Dph3] + NADH = 2 [4Fe-4S](1+)-[protein] + 2 [Dph3] + NAD(+) + H(+). It functions in the pathway protein modification; peptidyl-diphthamide biosynthesis. Functionally, required for the first step of diphthamide biosynthesis, a post-translational modification of histidine which occurs in elongation factor 2. DPH1 and DPH2 transfer a 3-amino-3-carboxypropyl (ACP) group from S-adenosyl-L-methionine (SAM) to a histidine residue, the reaction is assisted by a reduction system comprising KTI11/DPH3 and a NADH-dependent reductase, predominantly CBR1. Acts as an electron donor to reduce the Fe-S cluster in DPH1-DPH2 keeping the [4Fe-4S] clusters in the active and reduced state. Restores iron to DPH1-DPH2 iron-sulfur clusters which have degraded from [4Fe-4S] to [3Fe-4S] by donating an iron atom to reform [4Fe-4S] clusters, in a manner dependent on the presence of elongation factor 2 and SAM. Together with ATS1; associates with the elongator complex and is required for tRNA Wobble base modifications mediated by the elongator complex. The elongator complex is required for multiple tRNA modifications, including mcm5U (5-methoxycarbonylmethyl uridine), mcm5s 2U (5-methoxycarbonylmethyl-2-thiouridine), and ncm5U (5-carbamoylmethyl uridine). This Saccharomyces cerevisiae (strain ATCC 204508 / S288c) (Baker's yeast) protein is Diphthamide biosynthesis protein 3.